The primary structure comprises 463 residues: Argininosuccinate lyase (463 aa).

Belongs to the lyase 1 family. Argininosuccinate lyase subfamily.

It is found in the cytoplasm. It catalyses the reaction 2-(N(omega)-L-arginino)succinate = fumarate + L-arginine. Its pathway is amino-acid biosynthesis; L-arginine biosynthesis; L-arginine from L-ornithine and carbamoyl phosphate: step 3/3. The polypeptide is Argininosuccinate lyase (Dinoroseobacter shibae (strain DSM 16493 / NCIMB 14021 / DFL 12)).